A 245-amino-acid polypeptide reads, in one-letter code: Biosynthetic peptidoglycan transglycosylase (245 aa).

The helical transmembrane segment at 20-42 (VYAGSVFAGAWLATQLFYLVQIA) threads the bilayer.

The protein belongs to the glycosyltransferase 51 family.

The protein localises to the cell inner membrane. It carries out the reaction [GlcNAc-(1-&gt;4)-Mur2Ac(oyl-L-Ala-gamma-D-Glu-L-Lys-D-Ala-D-Ala)](n)-di-trans,octa-cis-undecaprenyl diphosphate + beta-D-GlcNAc-(1-&gt;4)-Mur2Ac(oyl-L-Ala-gamma-D-Glu-L-Lys-D-Ala-D-Ala)-di-trans,octa-cis-undecaprenyl diphosphate = [GlcNAc-(1-&gt;4)-Mur2Ac(oyl-L-Ala-gamma-D-Glu-L-Lys-D-Ala-D-Ala)](n+1)-di-trans,octa-cis-undecaprenyl diphosphate + di-trans,octa-cis-undecaprenyl diphosphate + H(+). Its pathway is cell wall biogenesis; peptidoglycan biosynthesis. In terms of biological role, peptidoglycan polymerase that catalyzes glycan chain elongation from lipid-linked precursors. The polypeptide is Biosynthetic peptidoglycan transglycosylase (Burkholderia ambifaria (strain MC40-6)).